Consider the following 200-residue polypeptide: Protein GrpE (200 aa).

A compositionally biased stretch (polar residues) spans 1–11 (MSNQTNKAQDN). A disordered region spans residues 1-29 (MSNQTNKAQDNQVEEIVEGELLNENGTEA).

Belongs to the GrpE family. In terms of assembly, homodimer.

It is found in the cytoplasm. Its function is as follows. Participates actively in the response to hyperosmotic and heat shock by preventing the aggregation of stress-denatured proteins, in association with DnaK and GrpE. It is the nucleotide exchange factor for DnaK and may function as a thermosensor. Unfolded proteins bind initially to DnaJ; upon interaction with the DnaJ-bound protein, DnaK hydrolyzes its bound ATP, resulting in the formation of a stable complex. GrpE releases ADP from DnaK; ATP binding to DnaK triggers the release of the substrate protein, thus completing the reaction cycle. Several rounds of ATP-dependent interactions between DnaJ, DnaK and GrpE are required for fully efficient folding. This is Protein GrpE from Shewanella halifaxensis (strain HAW-EB4).